The following is a 431-amino-acid chain: MKRVLAIILGGGAGTRLYPLTKMRAKPAVPLAGKYRLIDIPISNCINSNINKMYVLTQFNSASLNRHLSQTYNLSAGFGQGFVEVLAAQQTPESPSWFEGTADAVRKYQWLFQEWDVDEYLILSGDQLYRMDYSLFINHHRSTGADLTVAALPVDAKQAEAFGLMRTDEDGRILEFREKPKGDSLLEMAVDTSRFGLSAESAKERPYLASMGIYVFSRDTLFDLLHQNPTHKDFGKEVIPEALQRGDRLKSYVFDDYWEDIGTIGAFYEANLALTQQPTPPFSFYDAEFPIYTRPRYLPPSKLVDSQITDSIIGEGSILKSCSIHHSVLGVRSRVEDEVVLQDSLLMGSDFFESSSERAVLRERGGIPLGVGKGTTVKRAILDKNARIGSNVTIVNKDHVEEADRPEHGFYIRNGIVVVVKNASIPDGTVI.

Residues glycine 163, 178 to 179 (EK), and serine 210 contribute to the alpha-D-glucose 1-phosphate site.

The protein belongs to the bacterial/plant glucose-1-phosphate adenylyltransferase family. In terms of assembly, homotetramer.

It carries out the reaction alpha-D-glucose 1-phosphate + ATP + H(+) = ADP-alpha-D-glucose + diphosphate. Its pathway is glycan biosynthesis; glycogen biosynthesis. Functionally, involved in the biosynthesis of ADP-glucose, a building block required for the elongation reactions to produce glycogen. Catalyzes the reaction between ATP and alpha-D-glucose 1-phosphate (G1P) to produce pyrophosphate and ADP-Glc. This chain is Glucose-1-phosphate adenylyltransferase, found in Synechococcus sp. (strain WH7803).